A 406-amino-acid chain; its full sequence is Endoplasmic reticulum resident protein 44 (406 aa).

The signal sequence occupies residues 1-29 (MNPAVFLSLADLRCSLLLLVTSIFTPITA). A Thioredoxin domain is found at 30 to 138 (EIASLDSENI…VKALADYIRQ (109 aa)). 2 cysteine pairs are disulfide-bonded: Cys-189-Cys-241 and Cys-301-Cys-318. Residues 236 to 285 (WIQDKCVPLVREITFENGEELTEEGLPFLILFHMKDDTESLEIFQNEVAR) form an interaction with ITPR1 region. The tract at residues 360 to 387 (FHHGPDPTDTAPGEQDQDVASSPPESSF) is disordered. Polar residues predominate over residues 377–387 (DVASSPPESSF). The Prevents secretion from ER signature appears at 403–406 (RDEL).

As to quaternary structure, forms mixed disulfides with both ERO1A and ERO1B and cargo folding intermediates; the interactions with ERO1A and ERO1B result in their retention in the endoplasmic reticulum. Directly interacts with ITPR1 in a pH-, redox state- and calcium-dependent manner, but not with ITPR2 or ITPR3. The strength of this interaction inversely correlates with calcium concentration. Widely expressed.

Its subcellular location is the endoplasmic reticulum lumen. Its function is as follows. Mediates thiol-dependent retention in the early secretory pathway, forming mixed disulfides with substrate proteins through its conserved CRFS motif. Inhibits the calcium channel activity of ITPR1. May have a role in the control of oxidative protein folding in the endoplasmic reticulum. Required to retain ERO1A and ERO1B in the endoplasmic reticulum. The protein is Endoplasmic reticulum resident protein 44 (Erp44) of Mus musculus (Mouse).